The sequence spans 474 residues: GTPase Der (474 aa).

EngA-type G domains lie at 3–167 and 204–379; these read FTVA…GVDR and LRVA…MVWN. GTP is bound by residues 9–16, 56–60, 119–122, 210–217, 257–261, and 322–325; these read GRPNVGKS, DTAGL, NKSE, GRPNAGKS, DTAGM, and NKWD. Residues 380-464 form the KH-like domain; it reads KRISTAKLNR…PIRIHLKASE (85 aa).

It belongs to the TRAFAC class TrmE-Era-EngA-EngB-Septin-like GTPase superfamily. EngA (Der) GTPase family. As to quaternary structure, associates with the 50S ribosomal subunit.

GTPase that plays an essential role in the late steps of ribosome biogenesis. This is GTPase Der from Allorhizobium ampelinum (strain ATCC BAA-846 / DSM 112012 / S4) (Agrobacterium vitis (strain S4)).